The sequence spans 287 residues: GPN-loop GTPase 3 (287 aa).

12-17 lines the GTP pocket; the sequence is GAGKST. Positions 69–71 match the Gly-Pro-Asn (GPN)-loop; involved in dimer interface motif; it reads GPN. 172-175 is a GTP binding site; the sequence is SKMD.

It belongs to the GPN-loop GTPase family. As to quaternary structure, heterodimers with GPN1 or GPN2. Binds to RNA polymerase II (RNAPII).

Functionally, small GTPase required for proper nuclear import of RNA polymerase II and III (RNAPII and RNAPIII). May act at an RNAP assembly step prior to nuclear import. This Cryptococcus neoformans var. neoformans serotype D (strain B-3501A) (Filobasidiella neoformans) protein is GPN-loop GTPase 3.